The following is a 206-amino-acid chain: 2,3-bisphosphoglycerate-dependent phosphoglycerate mutase (206 aa).

Substrate contacts are provided by residues 9-16, 22-23, Arg61, 88-91, Lys99, 115-116, and 159-160; these read RHGQSEWN, TG, ERDY, RR, and GN. His10 acts as the Tele-phosphohistidine intermediate in catalysis. The active-site Proton donor/acceptor is Glu88.

It belongs to the phosphoglycerate mutase family. BPG-dependent PGAM subfamily. As to quaternary structure, homodimer.

It carries out the reaction (2R)-2-phosphoglycerate = (2R)-3-phosphoglycerate. The protein operates within carbohydrate degradation; glycolysis; pyruvate from D-glyceraldehyde 3-phosphate: step 3/5. Its function is as follows. Catalyzes the interconversion of 2-phosphoglycerate and 3-phosphoglycerate. This is 2,3-bisphosphoglycerate-dependent phosphoglycerate mutase from Brucella ovis (strain ATCC 25840 / 63/290 / NCTC 10512).